The sequence spans 410 residues: Protein translocase subunit SecY 2 (410 aa).

The next 10 membrane-spanning stretches (helical) occupy residues 2-22, 45-65, 94-114, 125-145, 147-167, 188-208, 241-261, 284-304, 339-359, and 366-386; these read ILII…SAAL, FSIM…VQLL, LTLV…NTLT, FTII…MWLG, LITE…GILV, WIRF…IVWF, VIPV…LMFF, GVII…IVQI, YLSL…LLVA, and LQIG…IEIG.

This sequence belongs to the SecY/SEC61-alpha family. Component of the Sec protein translocase complex. Heterotrimer consisting of SecY, SecE and SecG subunits. The heterotrimers can form oligomers, although 1 heterotrimer is thought to be able to translocate proteins. Interacts with the ribosome. Interacts with SecDF, and other proteins may be involved. Interacts with SecA.

Its subcellular location is the cell membrane. Functionally, the central subunit of the protein translocation channel SecYEG. Consists of two halves formed by TMs 1-5 and 6-10. These two domains form a lateral gate at the front which open onto the bilayer between TMs 2 and 7, and are clamped together by SecE at the back. The channel is closed by both a pore ring composed of hydrophobic SecY resides and a short helix (helix 2A) on the extracellular side of the membrane which forms a plug. The plug probably moves laterally to allow the channel to open. The ring and the pore may move independently. This chain is Protein translocase subunit SecY 2, found in Lactobacillus kefiranofaciens subsp. kefiranofaciens.